The following is a 464-amino-acid chain: Asparagine--tRNA ligase (464 aa).

It belongs to the class-II aminoacyl-tRNA synthetase family. In terms of assembly, homodimer.

It is found in the cytoplasm. The enzyme catalyses tRNA(Asn) + L-asparagine + ATP = L-asparaginyl-tRNA(Asn) + AMP + diphosphate + H(+). This is Asparagine--tRNA ligase from Xanthomonas axonopodis pv. citri (strain 306).